We begin with the raw amino-acid sequence, 829 residues long: DNA ligase (829 aa).

NAD(+) contacts are provided by residues 38-42 (DAEYD), 87-88 (SL), and glutamate 127. Lysine 129 functions as the N6-AMP-lysine intermediate in the catalytic mechanism. The NAD(+) site is built by arginine 150, glutamate 187, lysine 305, and lysine 329. Cysteine 455, cysteine 458, cysteine 473, and cysteine 479 together coordinate Zn(2+). Residues 534–564 (ETADKGSSENENGDAETVSGDLSKYNTQNGK) form a disordered region. Residues 752-829 (GINKAVAGKT…SEAELLTLLC (78 aa)) form the BRCT domain.

The protein belongs to the NAD-dependent DNA ligase family. LigA subfamily. The cofactor is Mg(2+). It depends on Mn(2+) as a cofactor.

The catalysed reaction is NAD(+) + (deoxyribonucleotide)n-3'-hydroxyl + 5'-phospho-(deoxyribonucleotide)m = (deoxyribonucleotide)n+m + AMP + beta-nicotinamide D-nucleotide.. Its function is as follows. DNA ligase that catalyzes the formation of phosphodiester linkages between 5'-phosphoryl and 3'-hydroxyl groups in double-stranded DNA using NAD as a coenzyme and as the energy source for the reaction. It is essential for DNA replication and repair of damaged DNA. The polypeptide is DNA ligase (Neisseria gonorrhoeae (strain ATCC 700825 / FA 1090)).